The chain runs to 219 residues: Probable GTP-binding protein EngB (219 aa).

The EngB-type G domain occupies 40-212 (LLPEIAFIGK…KASLAKCIIK (173 aa)). GTP contacts are provided by residues 48–55 (GKSNVGKS), 75–79 (GRTGQ), 93–96 (DLPG), 160–163 (TKFD), and 191–193 (VSS). Mg(2+)-binding residues include Ser-55 and Thr-77.

The protein belongs to the TRAFAC class TrmE-Era-EngA-EngB-Septin-like GTPase superfamily. EngB GTPase family. Requires Mg(2+) as cofactor.

Functionally, necessary for normal cell division and for the maintenance of normal septation. In Rickettsia canadensis (strain McKiel), this protein is Probable GTP-binding protein EngB.